Consider the following 71-residue polypeptide: Protein cef (71 aa).

Functionally, plays a role in the processing of a cluster of viral tRNAs. The polypeptide is Protein cef (cef) (Escherichia coli (Bacteriophage T4)).